Reading from the N-terminus, the 124-residue chain is MRHVGDRGEAVVAAWLQTQQCQILAQNWSCPWGELDIIACDPGGVVLFVEVKTRGSYNWDRDGLDAISPSKQRKLILAAQAFLESQPQWQEHPCRFDVALVRHQRGAYHLHHYLAQAFTLDSIK.

The protein belongs to the UPF0102 family.

The polypeptide is UPF0102 protein tll1737 (Thermosynechococcus vestitus (strain NIES-2133 / IAM M-273 / BP-1)).